Reading from the N-terminus, the 692-residue chain is Elongation factor G (692 aa).

The tr-type G domain maps to 8-282; sequence ERTRNIGIMA…AIVDYLPAPT (275 aa). Residues 17 to 24, 81 to 85, and 135 to 138 each bind GTP; these read AHIDAGKT, DTPGH, and NKMD.

It belongs to the TRAFAC class translation factor GTPase superfamily. Classic translation factor GTPase family. EF-G/EF-2 subfamily.

It localises to the cytoplasm. Catalyzes the GTP-dependent ribosomal translocation step during translation elongation. During this step, the ribosome changes from the pre-translocational (PRE) to the post-translocational (POST) state as the newly formed A-site-bound peptidyl-tRNA and P-site-bound deacylated tRNA move to the P and E sites, respectively. Catalyzes the coordinated movement of the two tRNA molecules, the mRNA and conformational changes in the ribosome. This Desulforamulus reducens (strain ATCC BAA-1160 / DSM 100696 / MI-1) (Desulfotomaculum reducens) protein is Elongation factor G.